The primary structure comprises 185 residues: MGQQVIKSSTEKMEKAVAAYSRELATVRAGRASASILDKVQVDYYGAPTPVVQLANITVPEARLLVIQPYDKTSIGDIEKAILKADLGLNPSNDGSVIRIAFPALTEERRRELVKVVKKYAEDAKVAIRNVRRDGNDELKKLEKAGEMTEDDLRGYTEDIQKETDKYIAKVDEIAKNKEQEIMEV.

The protein belongs to the RRF family.

It is found in the cytoplasm. Responsible for the release of ribosomes from messenger RNA at the termination of protein biosynthesis. May increase the efficiency of translation by recycling ribosomes from one round of translation to another. This is Ribosome-recycling factor from Bacillus cytotoxicus (strain DSM 22905 / CIP 110041 / 391-98 / NVH 391-98).